The following is a 225-amino-acid chain: Enolase-phosphatase E1 (225 aa).

This sequence belongs to the HAD-like hydrolase superfamily. MasA/MtnC family. In terms of assembly, monomer. Mg(2+) serves as cofactor.

It carries out the reaction 5-methylsulfanyl-2,3-dioxopentyl phosphate + H2O = 1,2-dihydroxy-5-(methylsulfanyl)pent-1-en-3-one + phosphate. Its pathway is amino-acid biosynthesis; L-methionine biosynthesis via salvage pathway; L-methionine from S-methyl-5-thio-alpha-D-ribose 1-phosphate: step 3/6. It participates in amino-acid biosynthesis; L-methionine biosynthesis via salvage pathway; L-methionine from S-methyl-5-thio-alpha-D-ribose 1-phosphate: step 4/6. Bifunctional enzyme that catalyzes the enolization of 2,3-diketo-5-methylthiopentyl-1-phosphate (DK-MTP-1-P) into the intermediate 2-hydroxy-3-keto-5-methylthiopentenyl-1-phosphate (HK-MTPenyl-1-P), which is then dephosphorylated to form the acireductone 1,2-dihydroxy-3-keto-5-methylthiopentene (DHK-MTPene). This is Enolase-phosphatase E1 from Shewanella denitrificans (strain OS217 / ATCC BAA-1090 / DSM 15013).